The primary structure comprises 86 residues: UPF0335 protein BruAb1_1737 (86 aa).

Belongs to the UPF0335 family.

The protein is UPF0335 protein BruAb1_1737 of Brucella abortus biovar 1 (strain 9-941).